The primary structure comprises 297 residues: 4-diphosphocytidyl-2-C-methyl-D-erythritol kinase (297 aa).

Lys10 is an active-site residue. 95–105 contacts ATP; it reads PVAGGMAGGSA. The active site involves Asp137.

It belongs to the GHMP kinase family. IspE subfamily.

The enzyme catalyses 4-CDP-2-C-methyl-D-erythritol + ATP = 4-CDP-2-C-methyl-D-erythritol 2-phosphate + ADP + H(+). It participates in isoprenoid biosynthesis; isopentenyl diphosphate biosynthesis via DXP pathway; isopentenyl diphosphate from 1-deoxy-D-xylulose 5-phosphate: step 3/6. Its function is as follows. Catalyzes the phosphorylation of the position 2 hydroxy group of 4-diphosphocytidyl-2C-methyl-D-erythritol. The protein is 4-diphosphocytidyl-2-C-methyl-D-erythritol kinase of Streptomyces avermitilis (strain ATCC 31267 / DSM 46492 / JCM 5070 / NBRC 14893 / NCIMB 12804 / NRRL 8165 / MA-4680).